The sequence spans 92 residues: MKTLLLTLVVVTIVCLDLGDSLICYLGYNNPQTCAPGQNLCYTKKWCDAFCLQRGKVIQLGCAATCPTTKPYEEVTCCSRDKCNPHPAQRSR.

A signal peptide spans 1–21 (MKTLLLTLVVVTIVCLDLGDS). Intrachain disulfides connect cysteine 24–cysteine 41, cysteine 34–cysteine 62, cysteine 47–cysteine 51, cysteine 66–cysteine 77, and cysteine 78–cysteine 83.

It belongs to the three-finger toxin family. Long-chain subfamily. Type II alpha-neurotoxin sub-subfamily. As to expression, expressed by the venom gland.

The protein resides in the secreted. In terms of biological role, binds with high affinity to muscular (alpha-1/CHRNA1) and neuronal (alpha-7/CHRNA7) nicotinic acetylcholine receptor (nAChR) and inhibits acetylcholine from binding to the receptor, thereby impairing neuromuscular and neuronal transmission. The protein is Long neurotoxin 469 of Drysdalia coronoides (White-lipped snake).